The following is a 901-amino-acid chain: MNLMDRVLHAGEGKIIRRLNRIVGQVNSIEEDYVAMDDDELAGQTADFRQRLDNGESLDRLLPEAFATVREASKRVLGKRHFDVQIMGGAALHQCNIAEMKTGEGKTLVGLLPAYLEGLLGEGVHIVTVNDYLARVQSEQMGRVHRFLGLSISAILSDMPPMARKEAYKADVTYGTNNEFGFDYLRDNMASSLSECVQRGHHYAIVDEVDSILVDEARTPLIISGPAEENKQWYPEFAKIVSRLERDVDYEVDEKKRTVSVLGHGITVVEERLGIENLYESANTPLIGYLNNAIKAKELFHRDKDYVVVGGEVLIVDEHTGRTLAGRRYNEGLHQALEAKEHVEIKDEYQTLATITLQNYFRMYDKLAGMTGTAKTEESEFQKIYGLGVIPIPTNRPMIRKDQKDLIYRTEDAKFDAIIADVVERHEAGQPILIGTASVAKSELLSEKLKRAGVPHKVLNAKHHESEAAIVALAGRKGAVTVSTNMAGRGTDIILGGNPEFLTELDLREKGLDPLEDQDAYQTAWNNTLAKYEEQSQAEHNEVEGLGGLYVIGSERHESRRIDNQLRGRSGRQGDPGESRFYLSLQDELMRLFKPEVIDRAMVTLKMPEDMPIESKWVSRQIESAQKQVEAQNFEMRKNVLKYDDVMNRQRHVIYGDRRKVLEGADVETELRATTDRVVEAGVRKYAEGYSEDWDLEAMWNEIGTVYPVGLDLDEYADCQDVEELIEDFKADAQEAYDRRESELGEATMRQLEREVLLTVLDRKWREHLYEMDYLREGIGLRAMAQRDPLVEYQREGGDMFNSMMDSFKEEVVGFLFNLEIETGPQVGLVTDDGGNPVTADSVLPKVNRPRRALTYSAPDEQGEAETTSEDGQKPRGEGNRAARRSAASKKPKNRRNKKRR.

Residues Gln-85, 103–107 (GEGKT), and Asp-492 each bind ATP. The disordered stretch occupies residues 828-901 (GLVTDDGGNP…PKNRRNKKRR (74 aa)). Residues 871-881 (DGQKPRGEGNR) show a composition bias toward basic and acidic residues. Over residues 882 to 901 (AARRSAASKKPKNRRNKKRR) the composition is skewed to basic residues.

It belongs to the SecA family. Monomer and homodimer. Part of the essential Sec protein translocation apparatus which comprises SecA, SecYEG and auxiliary proteins SecDF. Other proteins may also be involved.

Its subcellular location is the cell membrane. The protein resides in the cytoplasm. The catalysed reaction is ATP + H2O + cellular proteinSide 1 = ADP + phosphate + cellular proteinSide 2.. Part of the Sec protein translocase complex. Interacts with the SecYEG preprotein conducting channel. Has a central role in coupling the hydrolysis of ATP to the transfer of proteins into and across the cell membrane, serving as an ATP-driven molecular motor driving the stepwise translocation of polypeptide chains across the membrane. This chain is Protein translocase subunit SecA, found in Cutibacterium acnes (strain DSM 16379 / KPA171202) (Propionibacterium acnes).